We begin with the raw amino-acid sequence, 293 residues long: ATP synthase gamma chain (293 aa).

It belongs to the ATPase gamma chain family. In terms of assembly, F-type ATPases have 2 components, CF(1) - the catalytic core - and CF(0) - the membrane proton channel. CF(1) has five subunits: alpha(3), beta(3), gamma(1), delta(1), epsilon(1). CF(0) has three main subunits: a, b and c.

The protein localises to the cell membrane. Functionally, produces ATP from ADP in the presence of a proton gradient across the membrane. The gamma chain is believed to be important in regulating ATPase activity and the flow of protons through the CF(0) complex. This Streptococcus agalactiae serotype Ia (strain ATCC 27591 / A909 / CDC SS700) protein is ATP synthase gamma chain.